Reading from the N-terminus, the 397-residue chain is Acetyl-CoA acetyltransferase, cytosolic (397 aa).

At Met1 the chain carries N-acetylmethionine. Cys92 (acyl-thioester intermediate) is an active-site residue. Residue Lys200 is modified to N6-acetyllysine. Residues Arg223 and Ser226 each coordinate CoA. Residues Lys233 and Lys235 each carry the N6-acetyllysine modification. Ser252 contributes to the CoA binding site. Cys383 acts as the Proton donor/acceptor in catalysis.

Belongs to the thiolase-like superfamily. Thiolase family. Homotetramer.

The protein localises to the cytoplasm. The protein resides in the cytosol. It catalyses the reaction 2 acetyl-CoA = acetoacetyl-CoA + CoA. It participates in lipid metabolism; fatty acid metabolism. Functionally, involved in the biosynthetic pathway of cholesterol. The protein is Acetyl-CoA acetyltransferase, cytosolic (Acat2) of Rattus norvegicus (Rat).